A 264-amino-acid polypeptide reads, in one-letter code: Neurexophilin-2 (264 aa).

The first 22 residues, 1–22 (MRLRPLPLVVVPGLLQLLFCDS), serve as a signal peptide directing secretion. Residues 23 to 90 (KEVVHATEGL…WDWLANITEI (68 aa)) form an II region. N-linked (GlcNAc...) asparagine glycosylation is found at N86, N139, N149, and N155. The III stretch occupies residues 91–169 (QEPLARTKRR…LVPPSKVVEF (79 aa)). An IV (linker domain) region spans residues 170-178 (EVSPQSTLE). The v (Cys-rich) stretch occupies residues 179 to 264 (TKESKSFNCR…HSETPYLSSG (86 aa)).

The protein belongs to the neurexophilin family. In terms of processing, may be proteolytically processed at the boundary between the N-terminal non-conserved and the central conserved domain in neuron-like cells. In terms of tissue distribution, expressed in brain and kidney.

It is found in the secreted. In terms of biological role, may be signaling molecules that resemble neuropeptides and that act by binding to alpha-neurexins and possibly other receptors. This chain is Neurexophilin-2 (NXPH2), found in Homo sapiens (Human).